Reading from the N-terminus, the 1107-residue chain is Polyphosphatidylinositol phosphatase INP53 (1107 aa).

Residues 142-482 (LKKLLSNGSF…GDQISQIYTG (341 aa)) enclose the SAC domain. Position 497 is a phosphoserine (Ser-497). Residues 926–1107 (TASSVASSSP…LDSWQPLTPK (182 aa)) are disordered. Over residues 927 to 942 (ASSVASSSPVSSASAS) the composition is skewed to low complexity. A compositionally biased stretch (polar residues) spans 943–956 (LQPVRTQNSSQSRT). Ser-986 is modified (phosphoserine). 4 stretches are compositionally biased toward polar residues: residues 987-1005 (PTPQ…NIQE), 1020-1038 (FSQN…SPMS), 1045-1063 (NSAS…QTPT), and 1097-1107 (TLDSWQPLTPK). Position 1035 is a phosphoserine (Ser-1035). The residue at position 1105 (Thr-1105) is a Phosphothreonine.

Belongs to the synaptojanin family. It in the central section; belongs to the inositol 1,4,5-trisphosphate 5-phosphatase family. As to quaternary structure, interacts (via SAC domain) with BSP1; the interaction is direct. Interacts with CHC1.

It localises to the cytoplasm. It catalyses the reaction a 1,2-diacyl-sn-glycero-3-phospho-(1D-myo-inositol-4,5-bisphosphate) + H2O = a 1,2-diacyl-sn-glycero-3-phospho-(1D-myo-inositol 4-phosphate) + phosphate. In terms of biological role, dephosphorylates a number of phosphatidylinositols (PIs) like phosphatidylinositol 4,5-bisphosphate (PtdIns(4,5)P2), but also phosphatidylinositol 3-phosphate (PtdIns(3)P), phosphatidylinositol 4-phosphate (PtdIns(4)P), and phosphatidylinositol 3,5-bisphosphate (PtdIns(3,5)P2). Controls the cellular levels and subcellular distribution of phosphatidylinositol 3-phosphate and phosphatidylinositol 4,5-bisphosphate. Plays an essential role in a TGN (trans Golgi network)-to-early endosome pathway. Involved in clathrin-mediated protein sorting at the TGN. The protein is Polyphosphatidylinositol phosphatase INP53 (INP53) of Saccharomyces cerevisiae (strain ATCC 204508 / S288c) (Baker's yeast).